Here is a 281-residue protein sequence, read N- to C-terminus: Ribosomal protein L11 methyltransferase (281 aa).

S-adenosyl-L-methionine-binding residues include threonine 133, glycine 154, aspartate 175, and asparagine 216.

This sequence belongs to the methyltransferase superfamily. PrmA family.

The protein resides in the cytoplasm. The catalysed reaction is L-lysyl-[protein] + 3 S-adenosyl-L-methionine = N(6),N(6),N(6)-trimethyl-L-lysyl-[protein] + 3 S-adenosyl-L-homocysteine + 3 H(+). Methylates ribosomal protein L11. The protein is Ribosomal protein L11 methyltransferase of Campylobacter jejuni subsp. jejuni serotype O:6 (strain 81116 / NCTC 11828).